Here is a 338-residue protein sequence, read N- to C-terminus: Formamidase (338 aa).

The CN hydrolase domain maps to 14 to 260; the sequence is LLIAAIQYPV…WEIVTAELFP (247 aa). Catalysis depends on glutamate 60, which acts as the Proton acceptor. The active-site Proton donor is the lysine 133. Cysteine 166 acts as the Nucleophile in catalysis.

Belongs to the carbon-nitrogen hydrolase superfamily. Aliphatic amidase family.

The catalysed reaction is formamide + H2O = formate + NH4(+). Its function is as follows. Is an aliphatic amidase with a restricted substrate specificity, as it only hydrolyzes formamide. This is Formamidase from Photorhabdus laumondii subsp. laumondii (strain DSM 15139 / CIP 105565 / TT01) (Photorhabdus luminescens subsp. laumondii).